The sequence spans 418 residues: Ig-like V-type domain-containing protein FAM187A (418 aa).

An N-terminal signal peptide occupies residues 1–18 (MRLAPTTVLLWAWGSLQA). Over 19–376 (FEIVEKENIF…ASLSDPETRT (358 aa)) the chain is Extracellular. The region spanning 267-361 (PWVPQVPIQF…IAGFRLGVTS (95 aa)) is the Ig-like V-type domain. Residues Cys289 and Cys345 are joined by a disulfide bond. Residue Asn317 is glycosylated (N-linked (GlcNAc...) asparagine). The chain crosses the membrane as a helical span at residues 377 to 397 (AVELTLIGYLLIAVVFVTIHL). The Cytoplasmic segment spans residues 398–418 (CRCCCQSRCCPNFSAQTLLQL).

Belongs to the FAM187 family.

It localises to the membrane. This is Ig-like V-type domain-containing protein FAM187A (Fam187a) from Rattus norvegicus (Rat).